The sequence spans 1380 residues: Mitogen-activated protein kinase kinase kinase 5 (1380 aa).

Residues 30–97 are disordered; that stretch reads CRRGGGAATA…GNSGSGGGRR (68 aa). The segment covering 37–49 has biased composition (low complexity); sequence ATAAEGEPSLQPL. A compositionally biased stretch (pro residues) spans 50–59; the sequence is LVPPPPPPPG. Arginine 85 and arginine 87 each carry asymmetric dimethylarginine. The residue at position 90 (serine 90) is a Phosphoserine; by PIM1 and PKB/AKT1. Residues 649–1374 form an interaction with PPIA/CYPA region; sequence HCKRFFEMVN…MLCTLWKAII (726 aa). A Protein kinase domain is found at 687–945; sequence NGDRVVLGKG…ANDLLIDEFL (259 aa). Residues 693–701 and lysine 716 contribute to the ATP site; that span reads LGKGTYGIV. Residue tyrosine 725 is modified to Phosphotyrosine. Aspartate 810 serves as the catalytic Proton acceptor. Threonine 820 carries the phosphothreonine; by autocatalysis modification. The residue at position 845 (threonine 845) is a Phosphothreonine; by autocatalysis, MELK and MAP3K6. Residue threonine 849 is modified to Phosphothreonine; by autocatalysis. Serine 965 bears the Phosphoserine mark. Serine 973 is modified (phosphoserine; by autocatalysis). Serine 1036 and serine 1040 each carry phosphoserine. Positions 1188–1215 are disordered; that stretch reads ASESDTADPEDLDVEDEHEELSSNQTVR. Residues 1192 to 1206 show a composition bias toward acidic residues; that stretch reads DTADPEDLDVEDEHE. Residues 1252–1292 are a coiled coil; that stretch reads LGRMKIETNRLLEELVRKERELQALLHQAIEEKDQEIRHLK.

The protein belongs to the protein kinase superfamily. STE Ser/Thr protein kinase family. MAP kinase kinase kinase subfamily. As to quaternary structure, homodimer when inactive. Binds both upstream activators and downstream substrates in multimolecular complexes. Part of a cytoplasmic complex made of HIPK1, DAB2IP and MAP3K5 in response to TNF. This complex formation promotes MAP3K5-JNK activation and subsequent apoptosis. Interacts with SOCS1 which recognizes phosphorylation of Tyr-725 and induces MAP3K5/ASK1 degradation in endothelial cells. Interacts with the 14-3-3 family proteins such as YWHAB, YWHAE, YWHAQ, YWHAH, YWHAZ and SFN. Interacts with ARRB2, BIRC2, DAB2IP, IGF1R, MAP3K6/ASK2, PIM1, PGAM5, SOCS1, STUB1, TRAF2 and TXN. Interacts with ERN1 in a TRAF2-dependent manner. Interacts with calcineurin subunit PPP3R1, PPP5C, PPM1L and TRAF6. Interacts (via N-terminus) with RAF1 and this interaction inhibits the proapoptotic function of MAP3K5. Interacts with DAB2IP (via N-terminus C2 domain); the interaction occurs in a TNF-alpha-dependent manner. Interacts with DUSP13A; may positively regulate apoptosis. Interacts with PPIA/CYPA. Interacts with PRMT1; the interaction results in MAP3K5 methylation by PRMT1 which inhibits MAP3K5 activation. Interacts with TRAF2; the interaction is inhibited by PRMT1. Interacts with TRIM48. Mg(2+) serves as cofactor. Ser-90 and Ser-1040 are inactivating phosphorylation sites, the former of which is phosphorylated by AKT1. Phosphorylated at Ser-973 which induces association of MAP3K5/ASK1 with the 14-3-3 family proteins and suppresses MAP3K5/ASK1 activity. Calcineurin (CN) dephosphorylates this site. Also dephosphorylated and activated by PGAM5. Phosphorylated at Thr-845 through autophosphorylation and by MAP3K6/ASK2 which leads to activation. Thr-845 is dephosphorylated by PPP5C. Phosphorylation at Ser-973 in response to oxidative stress is negatively regulated by PPIA/CYPA. Post-translationally, ubiquitinated. Tumor necrosis factor (TNF) induces TNFR2-dependent ubiquitination, leading to proteasomal degradation. Ubiquitinated by RC3H2 in a TRIM48-dependent manner. In terms of processing, methylation at Arg-85 and Arg-87 by PRMT1 promotes association of MAP3K5 with thioredoxin and negatively regulates MAP3K5 association with TRAF2, inhibiting MAP3K5 activation. Methylation is blocked by ubiquitination of PRMT1 by TRIM48. In terms of tissue distribution, expressed in various adult mouse tissues including heart, brain, lung, liver and kidney.

It localises to the cytoplasm. It is found in the endoplasmic reticulum. It carries out the reaction L-seryl-[protein] + ATP = O-phospho-L-seryl-[protein] + ADP + H(+). It catalyses the reaction L-threonyl-[protein] + ATP = O-phospho-L-threonyl-[protein] + ADP + H(+). Activated by various stressors, including oxidative stress, endoplasmic reticulum stress, and calcium overload, as well as by receptor-mediated inflammatory signals, such as the tumor necrosis factor (TNF) and lipopolysaccharide (LPS). Homophilic association of MAP3K5/ASK1 through the C-terminal coiled-coil domains and the heteromeric complex formation of MAP3K5/ASK1 with the reduced form of thioredoxin (TXN), constitutes an inactive form of the kinase. Upon ROS-induced dissociation of TXN from MAP3K5/ASK1, TRAF2 and TRAF6 are reciprocally recruited to MAP3K5/ASK1 and form the active MAP3K5/ASK1 signalosome, in which TRAF2 and TRAF6 appear to facilitate the active configuration of MAP3K5/ASK1. MAP3K5/ASK1 activity is also regulated through several phosphorylation and dephosphorylation events. Thr-845 is an activating phosphorylation site that is autophosphorylated and phosphorylated by MAP3K6/ASK2 and dephosphorylated by PPP5C. Ser-90 and Ser-1040 are inactivating phosphorylation sites, the former of which is phosphorylated by AKT1. Phosphorylation of Ser-973 induces association of MAP3K5/ASK1 with the 14-3-3 family proteins, which suppresses MAP3K5/ASK1 activity. Calcium/calmodulin-activated protein phosphatase calcineurin (PPP3CA) has been shown to directly dephosphorylate this site. SOCS1 binds to ASK1 by recognizing phosphorylation of Tyr-725 and induces MAP3K5/ASK1 degradation in endothelial cells. Also dephosphorylated and activated by PGAM5. Contains an N-terminal autoinhibitory domain. Functionally, serine/threonine kinase which acts as an essential component of the MAP kinase signal transduction pathway. Plays an important role in the cascades of cellular responses evoked by changes in the environment. Mediates signaling for determination of cell fate such as differentiation and survival. Plays a crucial role in the apoptosis signal transduction pathway through mitochondria-dependent caspase activation. MAP3K5/ASK1 is required for the innate immune response, which is essential for host defense against a wide range of pathogens. Mediates signal transduction of various stressors like oxidative stress as well as by receptor-mediated inflammatory signals, such as the tumor necrosis factor (TNF) or lipopolysaccharide (LPS). Once activated, acts as an upstream activator of the MKK/JNK signal transduction cascade and the p38 MAPK signal transduction cascade through the phosphorylation and activation of several MAP kinase kinases like MAP2K4/SEK1, MAP2K3/MKK3, MAP2K6/MKK6 and MAP2K7/MKK7. These MAP2Ks in turn activate p38 MAPKs and c-jun N-terminal kinases (JNKs). Both p38 MAPK and JNKs control the transcription factors activator protein-1 (AP-1). This is Mitogen-activated protein kinase kinase kinase 5 (Map3k5) from Mus musculus (Mouse).